Reading from the N-terminus, the 193-residue chain is Urease accessory protein UreE (193 aa).

Residues 138 to 193 (RGAYHSHGAHSHDQGHAAHDHGNEHKHDHGHDHVHGPGCDHDHDHDHGHHHDHKHD) form a disordered region. The span at 147–193 (HSHDQGHAAHDHGNEHKHDHGHDHVHGPGCDHDHDHDHGHHHDHKHD) shows a compositional bias: basic and acidic residues.

The protein belongs to the UreE family.

It is found in the cytoplasm. Its function is as follows. Involved in urease metallocenter assembly. Binds nickel. Probably functions as a nickel donor during metallocenter assembly. This is Urease accessory protein UreE from Rhizobium leguminosarum bv. trifolii (strain WSM2304).